Reading from the N-terminus, the 621-residue chain is Glutamyl-tRNA(Gln) amidotransferase subunit E (621 aa).

Belongs to the GatB/GatE family. GatE subfamily. As to quaternary structure, heterodimer of GatD and GatE.

It carries out the reaction L-glutamyl-tRNA(Gln) + L-glutamine + ATP + H2O = L-glutaminyl-tRNA(Gln) + L-glutamate + ADP + phosphate + H(+). Allows the formation of correctly charged Gln-tRNA(Gln) through the transamidation of misacylated Glu-tRNA(Gln) in organisms which lack glutaminyl-tRNA synthetase. The reaction takes place in the presence of glutamine and ATP through an activated gamma-phospho-Glu-tRNA(Gln). The GatDE system is specific for glutamate and does not act on aspartate. This chain is Glutamyl-tRNA(Gln) amidotransferase subunit E, found in Methanobrevibacter smithii (strain ATCC 35061 / DSM 861 / OCM 144 / PS).